The sequence spans 184 residues: Protein DP71L (184 aa).

Residues 1–15 (MSRRNKRSRRRRKKP) are compositionally biased toward basic residues. A disordered region spans residues 1–41 (MSRRNKRSRRRRKKPLNTIQPGPSKPSAQDEPIKSVSHHSS). 2 important for host CHOP inhibition regions span residues 125–127 (VYF) and 169–173 (LSAVL).

Belongs to the asfivirus DP71L family. In terms of assembly, interacts (via C-terminus) with host PPP1CB.

Its function is as follows. Interacts with the host phosphatase PP1 catalytic subunit (PPP1CB) and recruits it to dephosphorylate EIF2S1/eIF2alpha and therefore restores the host translation that has been shut-down by the host. Also inhibits the EIF2S1/eIF2alpha-ATF4-DDIT3/CHOP pathway. The sequence is that of Protein DP71L from Ornithodoros (relapsing fever ticks).